A 432-amino-acid polypeptide reads, in one-letter code: Adenosylhomocysteinase (432 aa).

Substrate-binding residues include T56, D131, and E156. NAD(+) is bound at residue 157 to 159 (TTT). The substrate site is built by K186 and D190. NAD(+) contacts are provided by residues N191, 222–227 (GDVGKG), E243, 299–301 (IGH), and N346.

Belongs to the adenosylhomocysteinase family. It depends on NAD(+) as a cofactor.

It carries out the reaction S-adenosyl-L-homocysteine + H2O = L-homocysteine + adenosine. It functions in the pathway amino-acid biosynthesis; L-homocysteine biosynthesis; L-homocysteine from S-adenosyl-L-homocysteine: step 1/1. Its function is as follows. Adenosylhomocysteine is a competitive inhibitor of S-adenosyl-L-methionine-dependent methyl transferase reactions; therefore adenosylhomocysteinase may play a key role in the control of methylations via regulation of the intracellular concentration of adenosylhomocysteine. The sequence is that of Adenosylhomocysteinase (Ahcy13) from Anopheles gambiae (African malaria mosquito).